Here is a 289-residue protein sequence, read N- to C-terminus: 1D-myo-inositol 2-acetamido-2-deoxy-alpha-D-glucopyranoside deacetylase 1 (289 aa).

Residues H4, D7, and H140 each contribute to the Zn(2+) site.

This sequence belongs to the MshB deacetylase family. Requires Zn(2+) as cofactor.

It catalyses the reaction 1D-myo-inositol 2-acetamido-2-deoxy-alpha-D-glucopyranoside + H2O = 1D-myo-inositol 2-amino-2-deoxy-alpha-D-glucopyranoside + acetate. Its function is as follows. Catalyzes the deacetylation of 1D-myo-inositol 2-acetamido-2-deoxy-alpha-D-glucopyranoside (GlcNAc-Ins) in the mycothiol biosynthesis pathway. This chain is 1D-myo-inositol 2-acetamido-2-deoxy-alpha-D-glucopyranoside deacetylase 1, found in Frankia alni (strain DSM 45986 / CECT 9034 / ACN14a).